The primary structure comprises 418 residues: Lactate dehydrogenase (NAD(+),ferredoxin) subunit LctC (418 aa).

FAD contacts are provided by residues R285, 325-328, 343-348, N362, and 380-381; these read IGLS, SGAVQF, and DL.

It belongs to the ETF alpha-subunit/FixB family. As to quaternary structure, part of the stable heterotrimeric lactate dehydrogenase-Etf complex, which is formed by the lactate dehydrogenase LctD and the electron-transferring flavoprotein (Etf) alpha (LctC) and beta (LctB) subunits. The cofactor is FAD. It depends on [4Fe-4S] cluster as a cofactor.

The protein localises to the cytoplasm. It catalyses the reaction lactate + 2 reduced [2Fe-2S]-[ferredoxin] + 2 NAD(+) = 2 oxidized [2Fe-2S]-[ferredoxin] + pyruvate + 2 NADH. Its activity is regulated as follows. Activity is stimulated by divalent cations. Highest stimulation is observed with Ca(2+). Its function is as follows. The lactate dehydrogenase-Etf complex catalyzes the oxidation of lactate to pyruvate. It uses flavin-based electron confurcation to drive endergonic lactate oxidation with NAD(+) as oxidant at the expense of simultaneous exergonic electron flow from reduced ferredoxin to NAD(+). The electron transfer flavoprotein (Etf) mediates the electron transfer between the different donors and acceptors. This is Lactate dehydrogenase (NAD(+),ferredoxin) subunit LctC from Acetobacterium woodii (strain ATCC 29683 / DSM 1030 / JCM 2381 / KCTC 1655 / WB1).